A 149-amino-acid chain; its full sequence is uncharacterized protein (149 aa).

This is an uncharacterized protein from Escherichia coli (strain K12).